Here is a 221-residue protein sequence, read N- to C-terminus: Urease accessory protein UreF (221 aa).

Belongs to the UreF family. UreD, UreF and UreG form a complex that acts as a GTP-hydrolysis-dependent molecular chaperone, activating the urease apoprotein by helping to assemble the nickel containing metallocenter of UreC. The UreE protein probably delivers the nickel.

The protein localises to the cytoplasm. Its function is as follows. Required for maturation of urease via the functional incorporation of the urease nickel metallocenter. In Microcystis aeruginosa (strain NIES-843 / IAM M-2473), this protein is Urease accessory protein UreF.